A 60-amino-acid polypeptide reads, in one-letter code: Metallothionein B (60 aa).

The interval 1 to 28 is beta; that stretch reads MDPCDCSKSGTCNCGGSCTCTNCSCTTC. The a divalent metal cation site is built by C4, C6, C12, C14, C18, C20, C23, C25, C28, C32, C33, C35, C36, C40, C43, C47, C49, C54, C58, and C59. An alpha region spans residues 29-60; it reads KKSCCPCCPSGCTKCASGCVCKGKTCDTSCCQ.

This sequence belongs to the metallothionein superfamily. Type 1 family.

Functionally, metallothioneins have a high content of cysteine residues that bind various heavy metals. The polypeptide is Metallothionein B (mtb) (Dicentrarchus labrax (European seabass)).